A 337-amino-acid chain; its full sequence is Probable allantoicase 1 (337 aa).

Belongs to the allantoicase family.

The catalysed reaction is allantoate + H2O = (S)-ureidoglycolate + urea. Its pathway is nitrogen metabolism; (S)-allantoin degradation; (S)-ureidoglycolate from allantoate (aminidohydrolase route): step 1/1. This chain is Probable allantoicase 1, found in Burkholderia mallei (strain ATCC 23344).